The sequence spans 892 residues: MGSCISLQISCDQVLTRAYSCFFSLGNYIHKLKDNIVALEKAIEDLTATRDDVLRRVQMEEGKGLERLQQVQVWLKRVEIIRNQFYDLLSARNIEIQRLCFYSNCSTNLSSSYTYGQRVFLMIKEVENLNSNGFFEIVAAPAPKLEMRPIQPTIMGRETIFQRAWNRLMDDGVGTMGLYGMGGVGKTTLLTQIHNTLHDTKNGVDIVIWVVVSSDLQIHKIQEDIGEKLGFIGKEWNKKQESQKAVDILNCLSKKRFVLLLDDIWKKVDLTKIGIPSQTRENKCKVVFTTRSLDVCARMGVHDPMEVQCLSTNDAWELFQEKVGQISLGSHPDILELAKKVAGKCRGLPLALNVIGETMAGKRAVQEWHHAVDVLTSYAAEFSGMDDHILLILKYSYDNLNDKHVRSCFQYCALYPEDYSIKKYRLIDYWICEGFIDGNIGKERAVNQGYEILGTLVRACLLSEEGKNKLEVKMHDVVREMALWTLSDLGKNKERCIVQAGSGLRKVPKVEDWGAVRRLSLMNNGIEEISGSPECPELTTLFLQENKSLVHISGEFFRHMRKLVVLDLSENHQLDGLPEQISELVALRYLDLSHTNIEGLPACLQDLKTLIHLNLECMRRLGSIAGISKLSSLRTLGLRNSNIMLDVMSVKELHLLEHLEILTIDIVSTMVLEQMIDAGTLMNCMQEVSIRCLIYDQEQDTKLRLPTMDSLRSLTMWNCEISEIEIERLTWNTNPTSPCFFNLSQVIIHVCSSLKDLTWLLFAPNITYLMIEQLEQLQELISHAKATGVTEEEQQQLHKIIPFQKLQILHLSSLPELKSIYWISLSFPCLSGIYVERCPKLRKLPLDSKTGTVGKKFVLQYKETEWIESVEWKDEATKLHFLPSTKLVYILS.

A coiled-coil region spans residues 24 to 63 (SLGNYIHKLKDNIVALEKAIEDLTATRDDVLRRVQMEEGK). Residues 137–440 (IVAAPAPKLE…ICEGFIDGNI (304 aa)) form the NB-ARC domain. 180–187 (GMGGVGKT) provides a ligand contact to ATP. LRR repeat units lie at residues 515 to 536 (AVRRLSLMNNGIEEISGSPECP), 537 to 559 (ELTTLFLQENKSLVHISGEFFRH), 562 to 584 (KLVVLDLSENHQLDGLPEQISEL), 586 to 608 (ALRYLDLSHTNIEGLPACLQDLK), 609 to 631 (TLIHLNLECMRRLGSIAGISKLS), and 632 to 654 (SLRTLGLRNSNIMLDVMSVKELH).

It belongs to the disease resistance NB-LRR family.

Functionally, potential disease resistance protein. The chain is Putative disease resistance protein At4g10780 from Arabidopsis thaliana (Mouse-ear cress).